Consider the following 384-residue polypeptide: 4-hydroxy-3-methylbut-2-en-1-yl diphosphate synthase (flavodoxin) 1 (384 aa).

The [4Fe-4S] cluster site is built by Cys-281, Cys-284, Cys-316, and Glu-323.

Belongs to the IspG family. The cofactor is [4Fe-4S] cluster.

The enzyme catalyses (2E)-4-hydroxy-3-methylbut-2-enyl diphosphate + oxidized [flavodoxin] + H2O + 2 H(+) = 2-C-methyl-D-erythritol 2,4-cyclic diphosphate + reduced [flavodoxin]. Its pathway is isoprenoid biosynthesis; isopentenyl diphosphate biosynthesis via DXP pathway; isopentenyl diphosphate from 1-deoxy-D-xylulose 5-phosphate: step 5/6. Converts 2C-methyl-D-erythritol 2,4-cyclodiphosphate (ME-2,4cPP) into 1-hydroxy-2-methyl-2-(E)-butenyl 4-diphosphate. The protein is 4-hydroxy-3-methylbut-2-en-1-yl diphosphate synthase (flavodoxin) 1 of Streptomyces coelicolor (strain ATCC BAA-471 / A3(2) / M145).